We begin with the raw amino-acid sequence, 1201 residues long: Potassium channel subfamily T member 1 (1201 aa).

The tract at residues 1 to 28 (MARAKLKNSPSESNSHVKTVPPATTEDV) is disordered. Over 1-92 (MARAKLKNSP…FFIKNQRSSL (92 aa)) the chain is Cytoplasmic. Positions 8–17 (NSPSESNSHV) are enriched in polar residues. The helical transmembrane segment at 93-115 (RIRLFNFSLKLLTCLLYIVRVLL) threads the bilayer. Residues 116–152 (DNPEEGIGCWECEKQNYTLFNQSTKINWSHIFWVDRK) are Extracellular-facing. 2 N-linked (GlcNAc...) asparagine glycosylation sites follow: Asn131 and Asn136. The helical transmembrane segment at 153–175 (LPLWAVQVSIALISFLETMLLIY) threads the bilayer. Residues 176-184 (LSYKGNIWE) are Cytoplasmic-facing. The helical transmembrane segment at 185–206 (QIFRISFILEMINTVPFIITIF) threads the bilayer. At 207–216 (WPPLRNLFIP) the chain is on the extracellular side. A helical membrane pass occupies residues 217 to 229 (VFLNCWLAKYALE). The Cytoplasmic segment spans residues 230 to 249 (NMINDLHRAIQRTQSAMFNQ). The chain crosses the membrane as a helical span at residues 250–272 (VLILICTLLCLVFTGTCGIQHLE). Residues 273–279 (RAGEKLS) lie on the Extracellular side of the membrane. An intramembrane region (pore-forming) is located at residues 280 to 300 (LFKSFYFCIVTFSTVGYGDVT). Val294 and Gly295 together coordinate K(+). Topologically, residues 301-304 (PKIW) are extracellular. The chain crosses the membrane as a helical span at residues 305–326 (PSQLLVVIMICVALVVLPLQFE). Residues 327–1201 (ELVYLWMERQ…NPETRDETQL (875 aa)) are Cytoplasmic-facing. The region spanning 350 to 486 (EKHVVLCVSS…FHVKFADHVV (137 aa)) is the RCK N-terminal 1 domain. Na(+)-binding residues include Leu511, His514, Ser536, and Asn538. 2 residues coordinate Zn(2+): Cys750 and Cys751. Positions 753 and 756 each coordinate K(+). Residues Arg753 and Lys756 each coordinate Na(+). Zn(2+) is bound by residues Cys758 and His760. Residues Asn761, Tyr769, and Gly770 each contribute to the K(+) site. Phe771 provides a ligand contact to Na(+). The RCK N-terminal 2 domain maps to 773 to 913 (NKLIIVSAET…QFRAKDSYSL (141 aa)). K(+)-binding residues include Ser779, Leu810, Asp812, Gly834, and Asp857. The segment at 1175-1201 (NDGHSRKSSCSNKLGPCNPETRDETQL) is disordered.

Belongs to the potassium channel family. Calcium-activated (TC 1.A.1.3) subfamily. KCa4.1/KCNT1 sub-subfamily. Homotetramer; which constitutes the Na(+)-activated K(+) channel. Interacts with KCNT2; these heterodimer channels differ from the homomers in their unitary conductance, kinetic behavior, subcellular localization, and response to activation of protein kinase C. Phosphorylated by protein kinase C. Phosphorylation of the C-terminal domain increases channel activity.

It localises to the cell membrane. It catalyses the reaction K(+)(in) = K(+)(out). Activated by high intracellular Na(+). In addition to activation by Na(+), is cooperatively activated by intracellular Cl(-) levels. Inhibited by Zn(2+). Activated upon stimulation of G-protein coupled receptors, such as CHRM1 and GRIA1. Functionally, sodium-activated K(+) channel. Acts as an important mediator of neuronal membrane excitability. Contributes to the delayed outward currents. Regulates of neuronal bursting in sensory neurons. Contributes to synaptic development and plasticity. This chain is Potassium channel subfamily T member 1 (KCNT1), found in Gallus gallus (Chicken).